The chain runs to 570 residues: Glutamate--tRNA ligase, chloroplastic/mitochondrial (570 aa).

The N-terminal 39 residues, 1–39 (MASLVYGTPWLRVRSLPELAPAFLRRRQSSLFYCSRRSF), are a transit peptide targeting the chloroplast and mitochondrion. 57 to 59 (RFA) serves as a coordination point for L-glutamate. The short motif at 60–70 (PSPTGNLHVGG) is the 'HIGH' region element. His-67 is a binding site for ATP. L-glutamate contacts are provided by residues Glu-93, 245-249 (YNFCV), and Arg-263. Residues Glu-266 and 301–305 (KLSKR) each bind ATP. Residues 301–305 (KLSKR) carry the 'KMSKS' region motif.

Belongs to the class-I aminoacyl-tRNA synthetase family. Glutamate--tRNA ligase type 1 subfamily.

Its subcellular location is the plastid. It is found in the chloroplast. It localises to the mitochondrion. The catalysed reaction is tRNA(Glu) + L-glutamate + ATP = L-glutamyl-tRNA(Glu) + AMP + diphosphate. Functionally, catalyzes the attachment of glutamate to tRNA(Glu) in a two-step reaction: glutamate is first activated by ATP to form Glu-AMP and then transferred to the acceptor end of tRNA(Glu). The chain is Glutamate--tRNA ligase, chloroplastic/mitochondrial from Arabidopsis thaliana (Mouse-ear cress).